Here is an 85-residue protein sequence, read N- to C-terminus: Large ribosomal subunit protein uL29 (85 aa).

Belongs to the universal ribosomal protein uL29 family.

The polypeptide is Large ribosomal subunit protein uL29 (Thermobifida fusca (strain YX)).